Here is a 1047-residue protein sequence, read N- to C-terminus: Formin-like protein 3 (1047 aa).

A lipid anchor (N-myristoyl glycine) is attached at Gly2. Residues 22-462 (VPMPDPTELE…AAFQRHNNIE (441 aa)) form the GBD/FH3 domain. The disordered stretch occupies residues 520–561 (AVPVEAVAPPPPPPPPPPPPPPAPPLPSEVESIPIPPPPPPP). Positions 527–546 (APPPPPPPPPPPPPPAPPLP) are enriched in pro residues. Positions 580 to 970 (IKKPIKTKFR…MREKLLAQEA (391 aa)) constitute an FH2 domain. Residues 1000 to 1037 (DHRPVYEGKDGTIEDIITVLKSVPFTARTAKRGSRFFC) form the DAD domain.

It belongs to the formin homology family.

The protein resides in the cytoplasm. It is found in the cell membrane. In terms of biological role, required for developmental angiogenesis, but not for vasculogenesis. This chain is Formin-like protein 3 (fmnl3), found in Danio rerio (Zebrafish).